The sequence spans 290 residues: Eukaryotic translation initiation factor 3 subunit G (290 aa).

The interval 1 to 34 is disordered; that stretch reads MSRLGNRAADWADDEEFDDPSALPAQQVTTNKDG. The 79-residue stretch at 210 to 288 folds into the RRM domain; sequence ATLRVTNVSE…LILRVEFAKR (79 aa).

It belongs to the eIF-3 subunit G family. In terms of assembly, component of the eukaryotic translation initiation factor 3 (eIF-3) complex.

The protein resides in the cytoplasm. In terms of biological role, RNA-binding component of the eukaryotic translation initiation factor 3 (eIF-3) complex, which is involved in protein synthesis of a specialized repertoire of mRNAs and, together with other initiation factors, stimulates binding of mRNA and methionyl-tRNAi to the 40S ribosome. The eIF-3 complex specifically targets and initiates translation of a subset of mRNAs involved in cell proliferation. This subunit can bind 18S rRNA. The protein is Eukaryotic translation initiation factor 3 subunit G (tif35) of Aspergillus fumigatus (strain CBS 144.89 / FGSC A1163 / CEA10) (Neosartorya fumigata).